We begin with the raw amino-acid sequence, 119 residues long: Large ribosomal subunit protein bL19 (119 aa).

This sequence belongs to the bacterial ribosomal protein bL19 family.

In terms of biological role, this protein is located at the 30S-50S ribosomal subunit interface and may play a role in the structure and function of the aminoacyl-tRNA binding site. This Treponema denticola (strain ATCC 35405 / DSM 14222 / CIP 103919 / JCM 8153 / KCTC 15104) protein is Large ribosomal subunit protein bL19.